The sequence spans 318 residues: Trans-prenyltransferase (318 aa).

The chain crosses the membrane as a helical span at residues 1–21 (MLHLIYISIIVVLIIILISYT). Residues lysine 85, arginine 88, and histidine 122 each contribute to the isopentenyl diphosphate site. Residues aspartate 129 and aspartate 135 each contribute to the Mg(2+) site. Arginine 140 is a binding site for dimethylallyl diphosphate. Residue arginine 141 participates in isopentenyl diphosphate binding. Residues lysine 216, threonine 217, and glutamine 254 each contribute to the dimethylallyl diphosphate site.

The protein belongs to the FPP/GGPP synthase family. Asfivirus trans-prenyltransferase subfamily. Requires Mg(2+) as cofactor.

It localises to the host endoplasmic reticulum. The protein localises to the host membrane. It catalyses the reaction isopentenyl diphosphate + dimethylallyl diphosphate = (2E)-geranyl diphosphate + diphosphate. The catalysed reaction is isopentenyl diphosphate + (2E)-geranyl diphosphate = (2E,6E)-farnesyl diphosphate + diphosphate. The enzyme catalyses isopentenyl diphosphate + (2E,6E)-farnesyl diphosphate = (2E,6E,10E)-geranylgeranyl diphosphate + diphosphate. It carries out the reaction isopentenyl diphosphate + (2E,6E,10E)-geranylgeranyl diphosphate = (2E,6E,10E,14E)-geranylfarnesyl diphosphate + diphosphate. The protein operates within isoprenoid biosynthesis; farnesyl diphosphate biosynthesis; farnesyl diphosphate from geranyl diphosphate and isopentenyl diphosphate: step 1/1. It functions in the pathway isoprenoid biosynthesis; geranyl diphosphate biosynthesis; geranyl diphosphate from dimethylallyl diphosphate and isopentenyl diphosphate: step 1/1. It participates in isoprenoid biosynthesis; geranylgeranyl diphosphate biosynthesis; geranylgeranyl diphosphate from farnesyl diphosphate and isopentenyl diphosphate: step 1/1. Trans-prenyltransferase that catalyzes the sequential condensation of isopentenyl diphosphate (IPP) with different allylic diphosphates, such as dimethylallyl diphosphate (DMAPP), geranyl diphosphate (GPP), farnesyl diphosphate (FPP) and geranylgeranyl diphosphate (GGPP), farnesyl diphosphate being the best allylic substrate. The sequence is that of Trans-prenyltransferase from Ornithodoros (relapsing fever ticks).